A 1318-amino-acid chain; its full sequence is Putative tetratricopeptide repeat protein 41 (1318 aa).

TPR repeat units lie at residues 399–432 (TQLETDILNEDSDGLVFSFLVEVFIASISLKPCI), 653–684 (WVQEKPNGLLYFWHQSLSAVEHKLLGVITPVE), 817–850 (CRLMFFIGSFLKFMGKTNEAEELFLSVEDMLVQS), 858–891 (LKVQNAIGELYLETGMTQEGFQYFQKAWSSMLRL), 991–1027 (MEFLADLLFFPQRDSKKSQRKQVLKYYKQVIKIKENA), and 1045–1082 (SDTLCKLAGHLLASDSCHHVMIEAVGYLYRSVDLRVIH).

The protein resides in the cytoplasm. The sequence is that of Putative tetratricopeptide repeat protein 41 from Homo sapiens (Human).